A 264-amino-acid chain; its full sequence is Apolipoprotein A-I (264 aa).

A signal peptide spans 1-18; it reads MKAVVLTVAVLFLTGSQA. A run of 2 repeats spans residues 67–88 and 89–110. Residues 67–264 form a 10 X approximate tandem repeats region; the sequence is LKLLDNWDTL…DDAAKKLSSQ (198 aa). Methionine sulfoxide is present on methionine 109. One copy of the 3; half-length repeat lies at 111–121; the sequence is KDLEEVKQKVQ. Tandem repeats lie at residues 122–143, 144–165, and 166–187. One copy of the 7; truncated repeat lies at 188-207; sequence PYSDKMRERLAERLTALKDS. Methionine 193 carries the post-translational modification Methionine sulfoxide. Repeat 8 spans residues 208-229; it reads ASFAEYHAKASEHLKTLREKAK. The 9; half-length repeat unit spans residues 230 to 240; sequence PAIEDLGQGLL. Residues 241–264 form repeat 10; it reads PVLENLKASFLSAIDDAAKKLSSQ.

This sequence belongs to the apolipoprotein A1/A4/E family. Homodimer. Interacts with APOA1BP and CLU. Component of a sperm activating protein complex (SPAP), consisting of APOA1, an immunoglobulin heavy chain, an immunoglobulin light chain and albumin. Interacts with NDRG1. Interacts with SCGB3A2. Interacts with NAXE and YJEFN3. In terms of processing, glycosylated. Post-translationally, palmitoylated. Phosphorylation sites are present in the extracellular medium.

It is found in the secreted. Participates in the reverse transport of cholesterol from tissues to the liver for excretion by promoting cholesterol efflux from tissues and by acting as a cofactor for the lecithin cholesterol acyltransferase (LCAT). As part of the SPAP complex, activates spermatozoa motility. This is Apolipoprotein A-I (APOA1) from Castor canadensis (American beaver).